The primary structure comprises 351 residues: MGHKDFLHKLLSGDHFSQEEMTQCMNAIMNGVFPDTVIAALLALLEHKGVTSTEVAGAYYSLIAKANTIDLSPDAVDTCGTGGDHAGTYNISTIGSIIANSTGVSIAKHGNRSVTSSCGSADVLEELGFRIDLPVEATVELYARTGFSFLFAPLFHPSMKRVAHIRKELGIRTIFNMLGPLINPARSKRQLVGVYSSELMELYTEVLLQTGTRHAMIVHAMTEEGVSLDEPSLNGPTYIVEIQNGYVCRHTVYPEDFGLDRHPLSAIQGGERKQNAAIIRSILDGSASPAQIDAALYTSAMACYVSGHARCIDDGLTISRESLESGDTDRKFREILDFNAELSARYREAVN.

5-phospho-alpha-D-ribose 1-diphosphate is bound by residues Gly-80, 83–84 (GD), Thr-88, 90–93 (NIST), 108–116 (KHGNRSVTS), and Ser-120. Gly-80 provides a ligand contact to anthranilate. Residue Ser-92 coordinates Mg(2+). Asn-111 is an anthranilate binding site. Residue Arg-166 coordinates anthranilate. Mg(2+)-binding residues include Asp-229 and Glu-230.

The protein belongs to the anthranilate phosphoribosyltransferase family. As to quaternary structure, homodimer. Requires Mg(2+) as cofactor.

The catalysed reaction is N-(5-phospho-beta-D-ribosyl)anthranilate + diphosphate = 5-phospho-alpha-D-ribose 1-diphosphate + anthranilate. It functions in the pathway amino-acid biosynthesis; L-tryptophan biosynthesis; L-tryptophan from chorismate: step 2/5. Its function is as follows. Catalyzes the transfer of the phosphoribosyl group of 5-phosphorylribose-1-pyrophosphate (PRPP) to anthranilate to yield N-(5'-phosphoribosyl)-anthranilate (PRA). The sequence is that of Anthranilate phosphoribosyltransferase from Chlorobium limicola (strain DSM 245 / NBRC 103803 / 6330).